Here is a 277-residue protein sequence, read N- to C-terminus: Ribosomally synthesized cyclic peptide asperipin-2a precursor aprA (277 aa).

The N-terminal stretch at 1 to 19 (MHLSRYIAVLLSASSFVSA) is a signal peptide. Propeptides lie at residues 20 to 69 (LPLQ…LDKR), 76 to 88 (KRNA…LDKR), 95 to 107 (KRNA…LDKR), 114 to 126 (KRNA…LDKR), 133 to 145 (KRNA…LDKR), 152 to 164 (KRNA…LDKR), 171 to 183 (KRNA…LDKR), 190 to 202 (KRNA…LDKR), 209 to 221 (KRNA…LDKR), 228 to 240 (KRNA…LDKR), 247 to 259 (KRNA…LDKR), and 266 to 277 (KRNAETPEDLDK).

In terms of processing, aprA is processed by kexin proteases to produce 11 identical copies of the hexapeptide Phe-Tyr-Tyr-Thr-Gly-Tyr, that is further modified aprY and aprR to yield asperipin-2a. The bicyclic structure of asperipin-2a is likely synthesized by the single ustYa family oxidase aprY. The reductase aprR may be required for the final reduction to yield asperipin-2a.

Its pathway is secondary metabolite biosynthesis. Functionally, ribosomally synthesized cyclic peptide asperipin-2a precursor; part of the gene cluster that mediates the biosynthesis of the asperipin-2a, a bicyclic peptide that possesses two macrocyclic ether rings consisting of 14- and 17-membered paracyclophans. The aprA translated product contains a 11-fold repeated peptide embedding the hexapeptide Phe-Tyr-Tyr-Thr-Gly-Tyr, that is converted into asperipin-2a. After being excised from the precursor peptide by kexin proteases, the core peptides are cyclized and modified post-translationally by enzymes encoded within the corresponding gene cluster. The chain is Ribosomally synthesized cyclic peptide asperipin-2a precursor aprA from Aspergillus flavus (strain ATCC 200026 / FGSC A1120 / IAM 13836 / NRRL 3357 / JCM 12722 / SRRC 167).